Here is a 473-residue protein sequence, read N- to C-terminus: Photosystem II CP43 reaction center protein (473 aa).

The propeptide occupies Met1–Glu14. Position 15 is an N-acetylthreonine (Thr15). The residue at position 15 (Thr15) is a Phosphothreonine. The next 5 membrane-spanning stretches (helical) occupy residues Leu69–Ala93, Leu134–Asn155, Lys178–Thr200, Lys255–Ser275, and Trp291–Ala312. Residue Glu367 coordinates [CaMn4O5] cluster. Residues Arg447–Pro471 form a helical membrane-spanning segment.

It belongs to the PsbB/PsbC family. PsbC subfamily. As to quaternary structure, PSII is composed of 1 copy each of membrane proteins PsbA, PsbB, PsbC, PsbD, PsbE, PsbF, PsbH, PsbI, PsbJ, PsbK, PsbL, PsbM, PsbT, PsbX, PsbY, PsbZ, Psb30/Ycf12, at least 3 peripheral proteins of the oxygen-evolving complex and a large number of cofactors. It forms dimeric complexes. Requires Binds multiple chlorophylls and provides some of the ligands for the Ca-4Mn-5O cluster of the oxygen-evolving complex. It may also provide a ligand for a Cl- that is required for oxygen evolution. PSII binds additional chlorophylls, carotenoids and specific lipids. as cofactor.

It is found in the plastid. The protein localises to the chloroplast thylakoid membrane. Functionally, one of the components of the core complex of photosystem II (PSII). It binds chlorophyll and helps catalyze the primary light-induced photochemical processes of PSII. PSII is a light-driven water:plastoquinone oxidoreductase, using light energy to abstract electrons from H(2)O, generating O(2) and a proton gradient subsequently used for ATP formation. The sequence is that of Photosystem II CP43 reaction center protein from Crucihimalaya wallichii (Rock-cress).